The following is a 435-amino-acid chain: Thiosulfate sulfurtransferase YnjE (435 aa).

The first 23 residues, 1–23, serve as a signal peptide directing secretion; it reads MKRVSQMTALAMALGLACASSWA. Rhodanese domains lie at 36 to 138, 164 to 270, and 304 to 425; these read QQQN…RLQK, PAGD…PVER, and HRQD…NPVA. The Cysteine persulfide intermediate role is filled by Cys-385. Residue Arg-390 participates in substrate binding.

Monomer.

Its subcellular location is the periplasm. It carries out the reaction thiosulfate + hydrogen cyanide = thiocyanate + sulfite + 2 H(+). The chain is Thiosulfate sulfurtransferase YnjE (ynjE) from Escherichia coli (strain K12).